The primary structure comprises 198 residues: Transcriptional regulator GfcR (198 aa).

Belongs to the purine/pyrimidine phosphoribosyltransferase family. GfcR subfamily.

This is Transcriptional regulator GfcR from Thermoplasma acidophilum (strain ATCC 25905 / DSM 1728 / JCM 9062 / NBRC 15155 / AMRC-C165).